The sequence spans 139 residues: Small ribosomal subunit protein uS12 (139 aa).

The residue at position 102 (Asp-102) is a 3-methylthioaspartic acid.

Belongs to the universal ribosomal protein uS12 family. As to quaternary structure, part of the 30S ribosomal subunit. Contacts proteins S8 and S17. May interact with IF1 in the 30S initiation complex.

In terms of biological role, with S4 and S5 plays an important role in translational accuracy. Functionally, interacts with and stabilizes bases of the 16S rRNA that are involved in tRNA selection in the A site and with the mRNA backbone. Located at the interface of the 30S and 50S subunits, it traverses the body of the 30S subunit contacting proteins on the other side and probably holding the rRNA structure together. The combined cluster of proteins S8, S12 and S17 appears to hold together the shoulder and platform of the 30S subunit. The protein is Small ribosomal subunit protein uS12 of Phytoplasma australiense.